The following is a 129-amino-acid chain: MTPLDVMWVCLGGGVGSLGRWWIGRIVGEYHHGAFPLGTFLINISGAFVIGYLSVLFGVDWHDRYGTMLNAGVLTGILGGYTTFSSMQLDAVKLSHKGQGGLAVFYLVASVLSGLFAAWLGAMLAHLQG.

The next 4 helical transmembrane spans lie at 4–24 (LDVMWVCLGGGVGSLGRWWIG), 39–59 (TFLINISGAFVIGYLSVLFGV), 65–85 (YGTMLNAGVLTGILGGYTTFS), and 104–124 (VFYLVASVLSGLFAAWLGAML). Na(+)-binding residues include Gly-79 and Thr-82.

Belongs to the fluoride channel Fluc/FEX (TC 1.A.43) family.

The protein resides in the cell inner membrane. It catalyses the reaction fluoride(in) = fluoride(out). With respect to regulation, na(+) is not transported, but it plays an essential structural role and its presence is essential for fluoride channel function. Fluoride-specific ion channel. Important for reducing fluoride concentration in the cell, thus reducing its toxicity. This is Fluoride-specific ion channel FluC 2 from Brucella abortus biovar 1 (strain 9-941).